The chain runs to 330 residues: DNA-directed RNA polymerase subunit alpha (330 aa).

Residues 1–237 form an alpha N-terminal domain (alpha-NTD) region; the sequence is MYTEINEMLT…RQLHAFVDMK (237 aa). The segment at 251 to 330 is alpha C-terminal domain (alpha-CTD); that stretch reads FDPVLLRSVD…ENWPPASLGE (80 aa).

It belongs to the RNA polymerase alpha chain family. As to quaternary structure, homodimer. The RNAP catalytic core consists of 2 alpha, 1 beta, 1 beta' and 1 omega subunit. When a sigma factor is associated with the core the holoenzyme is formed, which can initiate transcription.

The catalysed reaction is RNA(n) + a ribonucleoside 5'-triphosphate = RNA(n+1) + diphosphate. Its function is as follows. DNA-dependent RNA polymerase catalyzes the transcription of DNA into RNA using the four ribonucleoside triphosphates as substrates. In Legionella pneumophila (strain Corby), this protein is DNA-directed RNA polymerase subunit alpha.